Reading from the N-terminus, the 307-residue chain is tRNA(Met) cytidine acetate ligase (307 aa).

Residues Val12 to Gln25, Gly106, Asn163, and Arg188 each bind ATP.

Belongs to the TmcAL family.

Its subcellular location is the cytoplasm. The enzyme catalyses cytidine(34) in elongator tRNA(Met) + acetate + ATP = N(4)-acetylcytidine(34) in elongator tRNA(Met) + AMP + diphosphate. Catalyzes the formation of N(4)-acetylcytidine (ac(4)C) at the wobble position of elongator tRNA(Met), using acetate and ATP as substrates. First activates an acetate ion to form acetyladenylate (Ac-AMP) and then transfers the acetyl group to tRNA to form ac(4)C34. The sequence is that of tRNA(Met) cytidine acetate ligase from Mycoplasmopsis synoviae (strain 53) (Mycoplasma synoviae).